The following is a 56-amino-acid chain: Small ribosomal subunit protein eS31 (56 aa).

Residues cysteine 28, cysteine 31, cysteine 46, and cysteine 49 each coordinate Zn(2+). The C4-type zinc-finger motif lies at 28-49; the sequence is CPRCGPGVFMANHKDRWSCGRC.

The protein belongs to the eukaryotic ribosomal protein eS31 family. In terms of assembly, part of the 30S ribosomal subunit. It depends on Zn(2+) as a cofactor.

This Thermococcus gammatolerans (strain DSM 15229 / JCM 11827 / EJ3) protein is Small ribosomal subunit protein eS31.